The chain runs to 947 residues: Zinc finger protein 268 (947 aa).

The region spanning 81–152 (LSFMDVFVDF…QAQVPNQTCP (72 aa)) is the KRAB domain. Ser178 is subject to Phosphoserine; by TBK1. C2H2-type zinc fingers lie at residues 276-298 (FGCS…QQTH), 304-326 (YGCN…QRIH), 332-354 (HECS…QRIH), 360-382 (YECC…QKTH), 388-410 (YVCN…ERIH), 416-438 (YECN…QRTH), 444-466 (YVCS…QGIH), 472-494 (YGCI…QRSH), 500-522 (YVCN…TRTH), 528-550 (HECN…QRIH), 556-578 (YECH…QRTH), 584-606 (YECT…QRTH), 612-634 (FECS…QRTH), 640-662 (YSCN…KGVH), 668-690 (YGCS…QRSH), 696-718 (YGCS…MRTH), 724-746 (HECR…QRIH), 752-774 (YECS…QRTH), 780-802 (YGCS…MRTH), 808-830 (YECN…ERTH), 836-858 (YKCS…QRMH), 864-886 (YECS…QRTH), 892-914 (YGCN…QRTH), and 920-942 (CKCT…QRTH).

The protein belongs to the krueppel C2H2-type zinc-finger protein family. In terms of assembly, interacts (via the KRAB domain) with TRIM28 (via the RBCC domain); the interaction increases ZNF268 nuclear localization activity. Isoform 2 interacts with CHUK and IKBKB; the interaction is further increased in a TNF-alpha-dependent manner. Interacts with TOLLIP; this interaction is impaired by ZNF268 phosphorylation at Ser-178. Forms a ternary complex with TBK1 and SETD4; the interaction between SETD4 and TBK1 is ZNF268-dependent and leads to TBK1 monomethylation. Phosphorylation at Ser-178 stabilizes the protein by interfering with its binding to TOLLIP, hence impairing its degradation by Tollip-mediated selective autophagy system. As to expression, overexpressed in ovarian cancer tissues compared to normal ovarian tissues. Isoform 1 and isoform 2 are expressed in squamous epithelium tissues. Isoform 2 is overexpressed in squamous cervical cancer (at protein level). Expressed in blood cells. Isoform 1 is expressed in pancreas, lung, skeletal muscle, heart, placenta, liver, kidney and brain. Isoform 2 expressed in chronic lymphocytic leukemia (CLL) and several tumor cell lines. Isoform 3 is expressed in several tumor cells. Isoform 5 is expressed in fetal liver and several tumor cells. Isoform 6 is weakly expressed in brain, lung amd small intestin and in several tumor cells. Isoform 7 is expressed in fetal liver and several tumor cells.

It is found in the nucleus. The protein localises to the cytoplasm. In terms of biological role, acts as a transcriptional repressor. Inhibits erythroid differentiation and tumor cell proliferation. Plays a role during ovarian cancer development and progression. Its function is as follows. Contributes to cervical carcinogenesis in part through the TNF-alpha-induced NF-kappa-B signaling pathway by interacting with the I-kappa-B-kinase (IKK) core complex. Functionally, involved in the regulation of antiviral interferon signaling. During viral infection, recruits SETD4 to TBK1, leading to TBK1 monomethylation, which is critical for the assembly of TBK1 complex and IRF3 signaling. This chain is Zinc finger protein 268 (ZNF268), found in Homo sapiens (Human).